A 216-amino-acid chain; its full sequence is Large ribosomal subunit protein uL24m (216 aa).

The transit peptide at methionine 1–leucine 9 directs the protein to the mitochondrion. Serine 24 carries the post-translational modification Phosphoserine. In terms of domain architecture, KOW spans leucine 56–glutamate 89.

The protein belongs to the universal ribosomal protein uL24 family. As to quaternary structure, component of the mitochondrial ribosome large subunit (39S) which comprises a 16S rRNA and about 50 distinct proteins.

The protein resides in the mitochondrion. The chain is Large ribosomal subunit protein uL24m (Mrpl24) from Mus musculus (Mouse).